The following is a 467-amino-acid chain: Probable apyrase 2 (467 aa).

The Cytoplasmic segment spans residues 1–25 (MRRYSALPGGGARPDTLADRLHRYR). Residues 26 to 46 (GVLLVILAPLALVSLVLLLMP) traverse the membrane as a helical; Signal-anchor for type II membrane protein segment. At 47 to 467 (RSPASSSAAA…PLGSAIEVAS (421 aa)) the chain is on the extracellular side. 70–80 (VIFDAGSSGSR) lines the ATP pocket. Glutamate 192 acts as the Proton acceptor in catalysis. ATP is bound at residue 216–226 (GVVDLGGGSVQ).

Belongs to the GDA1/CD39 NTPase family. Ca(2+) serves as cofactor.

Its subcellular location is the membrane. The enzyme catalyses a ribonucleoside 5'-triphosphate + 2 H2O = a ribonucleoside 5'-phosphate + 2 phosphate + 2 H(+). Catalyzes the hydrolysis of phosphoanhydride bonds of nucleoside tri- and di-phosphates. This Oryza sativa subsp. japonica (Rice) protein is Probable apyrase 2 (APY2).